A 189-amino-acid polypeptide reads, in one-letter code: Photosystem I assembly protein Ycf4 (189 aa).

2 helical membrane-spanning segments follow: residues 29-49 (WATIVTLGASGFLLAGISSYL) and 69-89 (LVMGLYGAAGLLLATYLWLVI).

This sequence belongs to the Ycf4 family.

Its subcellular location is the cellular thylakoid membrane. In terms of biological role, seems to be required for the assembly of the photosystem I complex. This chain is Photosystem I assembly protein Ycf4, found in Nostoc punctiforme (strain ATCC 29133 / PCC 73102).